We begin with the raw amino-acid sequence, 323 residues long: 4-hydroxy-3-methylbut-2-enyl diphosphate reductase (323 aa).

A [4Fe-4S] cluster-binding site is contributed by C12. Residues H43 and H81 each contribute to the (2E)-4-hydroxy-3-methylbut-2-enyl diphosphate site. Positions 43 and 81 each coordinate dimethylallyl diphosphate. Residues H43 and H81 each contribute to the isopentenyl diphosphate site. C103 provides a ligand contact to [4Fe-4S] cluster. A (2E)-4-hydroxy-3-methylbut-2-enyl diphosphate-binding site is contributed by H131. Position 131 (H131) interacts with dimethylallyl diphosphate. H131 is a binding site for isopentenyl diphosphate. E133 functions as the Proton donor in the catalytic mechanism. T170 lines the (2E)-4-hydroxy-3-methylbut-2-enyl diphosphate pocket. C198 provides a ligand contact to [4Fe-4S] cluster. (2E)-4-hydroxy-3-methylbut-2-enyl diphosphate is bound by residues S226, N228, and S271. Dimethylallyl diphosphate is bound by residues S226, N228, and S271. Isopentenyl diphosphate-binding residues include S226, N228, and S271.

The protein belongs to the IspH family. [4Fe-4S] cluster is required as a cofactor.

The catalysed reaction is isopentenyl diphosphate + 2 oxidized [2Fe-2S]-[ferredoxin] + H2O = (2E)-4-hydroxy-3-methylbut-2-enyl diphosphate + 2 reduced [2Fe-2S]-[ferredoxin] + 2 H(+). It catalyses the reaction dimethylallyl diphosphate + 2 oxidized [2Fe-2S]-[ferredoxin] + H2O = (2E)-4-hydroxy-3-methylbut-2-enyl diphosphate + 2 reduced [2Fe-2S]-[ferredoxin] + 2 H(+). Its pathway is isoprenoid biosynthesis; dimethylallyl diphosphate biosynthesis; dimethylallyl diphosphate from (2E)-4-hydroxy-3-methylbutenyl diphosphate: step 1/1. The protein operates within isoprenoid biosynthesis; isopentenyl diphosphate biosynthesis via DXP pathway; isopentenyl diphosphate from 1-deoxy-D-xylulose 5-phosphate: step 6/6. Its function is as follows. Catalyzes the conversion of 1-hydroxy-2-methyl-2-(E)-butenyl 4-diphosphate (HMBPP) into a mixture of isopentenyl diphosphate (IPP) and dimethylallyl diphosphate (DMAPP). Acts in the terminal step of the DOXP/MEP pathway for isoprenoid precursor biosynthesis. This chain is 4-hydroxy-3-methylbut-2-enyl diphosphate reductase, found in Lysinibacillus sphaericus (strain C3-41).